The following is a 377-amino-acid chain: Glutamate 5-kinase (377 aa).

An ATP-binding site is contributed by Lys18. Substrate is bound by residues Ser55, Asp142, and Asn154. ATP contacts are provided by residues 174–175 (SD) and 216–222 (TGGMKSK). The PUA domain maps to 281–359 (QGEVVVDAGA…REIEALLGYK (79 aa)).

This sequence belongs to the glutamate 5-kinase family.

It is found in the cytoplasm. It catalyses the reaction L-glutamate + ATP = L-glutamyl 5-phosphate + ADP. It functions in the pathway amino-acid biosynthesis; L-proline biosynthesis; L-glutamate 5-semialdehyde from L-glutamate: step 1/2. In terms of biological role, catalyzes the transfer of a phosphate group to glutamate to form L-glutamate 5-phosphate. In Meiothermus ruber, this protein is Glutamate 5-kinase.